The sequence spans 74 residues: Protein SlyX homolog (74 aa).

This sequence belongs to the SlyX family.

The chain is Protein SlyX homolog from Neisseria meningitidis serogroup C (strain 053442).